Consider the following 481-residue polypeptide: MQQNEKASLNTSAAAAKAGSYTGYADVYDFWYYHQRGDGLTVNGKPSYTTDKAVSEGLTRPHTTWNGDNVFGKAANLTYSFLNTFSSTPNGHTGPVKFTPVQMQQAKLSLQSWADAANLTFTEVSPNQKANITFANYTRNADGSLNTDTQAYAAYPGTHPVSGSAWFNYNQSSIRNPDTDEYGRHSFTHEIGHALGLSHPAEYNAGEGDISYKNSAAYAEDSRQFSIMSYWEVENTGGDFKGHYSAGPLMDDIAAIQKLYGANMTTRTGDTVYGFNSNTDRDFYTATNSSKALVFSVWDAGGTDTFDFSGYSNNQRINLNEGSFSDVGGLKGNVSIAHGVTIENAIGGSGNDILIGNGADNILQGGAGDDVLYGSTGADTLTGGAGRDIFVYGSGQDSTVSAYDWITDFQTGIDKIDLSAFRNEGQLSFVQDQFTGKGQEVMLQWDAANSTTNLWLHEAGHSSVDFLVRIVGQTAQSDIIV.

Residues 1–15 constitute a propeptide that is removed on maturation; that stretch reads MQQNEKASLNTSAAA. Histidine 189 serves as a coordination point for Zn(2+). Glutamate 190 is an active-site residue. The Zn(2+) site is built by histidine 193 and tyrosine 230. Ca(2+) is bound by residues arginine 267, glycine 269, threonine 271, aspartate 299, glycine 301, glycine 302, aspartate 304, threonine 341, glutamate 343, glycine 348, glycine 350, aspartate 352, asparagine 357, alanine 359, asparagine 361, glycine 365, glycine 366, alanine 367, glycine 368, aspartate 370, glycine 374, glycine 377, aspartate 379, glycine 383, glycine 384, alanine 385, glycine 386, aspartate 388, aspartate 397, aspartate 404, and aspartate 414. 3 Hemolysin-type calcium-binding repeats span residues 346 to 363, 364 to 381, and 382 to 399; these read IGGSGNDILIGNGADNIL, QGGAGDDVLYGSTGADTL, and TGGAGRDIFVYGSGQDST.

The protein belongs to the peptidase M10B family. Requires Ca(2+) as cofactor. It depends on Zn(2+) as a cofactor.

Its subcellular location is the secreted. It carries out the reaction Preferential cleavage of bonds with hydrophobic residues in P1'.. The chain is Serralysin B (prtB) from Dickeya chrysanthemi (Pectobacterium chrysanthemi).